The chain runs to 396 residues: Acetate kinase (396 aa).

Asparagine 8 provides a ligand contact to Mg(2+). Lysine 15 serves as a coordination point for ATP. Arginine 89 serves as a coordination point for substrate. Catalysis depends on aspartate 146, which acts as the Proton donor/acceptor. Residues 206–210, 283–285, and 331–335 each bind ATP; these read HIGNG, DMR, and GMGEN. Position 383 (glutamate 383) interacts with Mg(2+).

Belongs to the acetokinase family. As to quaternary structure, homodimer. Mg(2+) serves as cofactor. The cofactor is Mn(2+).

The protein localises to the cytoplasm. The enzyme catalyses acetate + ATP = acetyl phosphate + ADP. The protein operates within metabolic intermediate biosynthesis; acetyl-CoA biosynthesis; acetyl-CoA from acetate: step 1/2. Functionally, catalyzes the formation of acetyl phosphate from acetate and ATP. Can also catalyze the reverse reaction. The protein is Acetate kinase of Streptococcus uberis (strain ATCC BAA-854 / 0140J).